Here is an 857-residue protein sequence, read N- to C-terminus: Protein translocase subunit SecA (857 aa).

ATP contacts are provided by residues Gln-88, 106–110 (GEGKT), and Asp-496. Residues Cys-833, Cys-835, Cys-844, and Cys-845 each coordinate Zn(2+).

It belongs to the SecA family. As to quaternary structure, monomer and homodimer. Part of the essential Sec protein translocation apparatus which comprises SecA, SecYEG and auxiliary proteins SecDF-YajC and YidC. Zn(2+) is required as a cofactor.

It localises to the cell inner membrane. The protein localises to the cytoplasm. It catalyses the reaction ATP + H2O + cellular proteinSide 1 = ADP + phosphate + cellular proteinSide 2.. In terms of biological role, part of the Sec protein translocase complex. Interacts with the SecYEG preprotein conducting channel. Has a central role in coupling the hydrolysis of ATP to the transfer of proteins into and across the cell membrane, serving as an ATP-driven molecular motor driving the stepwise translocation of polypeptide chains across the membrane. This Sulfurimonas denitrificans (strain ATCC 33889 / DSM 1251) (Thiomicrospira denitrificans (strain ATCC 33889 / DSM 1251)) protein is Protein translocase subunit SecA.